Here is a 310-residue protein sequence, read N- to C-terminus: Protease HtpX homolog (310 aa).

Transmembrane regions (helical) follow at residues 16–36 (NAVL…VDAI) and 55–75 (IFPT…LVCI). Histidine 166 is a binding site for Zn(2+). Glutamate 167 is an active-site residue. Histidine 170 lines the Zn(2+) pocket. 2 helical membrane-spanning segments follow: residues 182-202 (VGIL…FFMG) and 214-234 (MILW…QMYL). Zn(2+) is bound at residue glutamate 239.

It belongs to the peptidase M48B family. Requires Zn(2+) as cofactor.

The protein localises to the cell inner membrane. The polypeptide is Protease HtpX homolog (Helicobacter pylori (strain J99 / ATCC 700824) (Campylobacter pylori J99)).